Here is a 263-residue protein sequence, read N- to C-terminus: NAD(P)H-quinone oxidoreductase subunit K, chloroplastic (263 aa).

[4Fe-4S] cluster is bound by residues C64, C65, C129, and C160.

The protein belongs to the complex I 20 kDa subunit family. As to quaternary structure, NDH is composed of at least 16 different subunits, 5 of which are encoded in the nucleus. [4Fe-4S] cluster is required as a cofactor.

The protein resides in the plastid. Its subcellular location is the chloroplast thylakoid membrane. The catalysed reaction is a plastoquinone + NADH + (n+1) H(+)(in) = a plastoquinol + NAD(+) + n H(+)(out). It carries out the reaction a plastoquinone + NADPH + (n+1) H(+)(in) = a plastoquinol + NADP(+) + n H(+)(out). In terms of biological role, NDH shuttles electrons from NAD(P)H:plastoquinone, via FMN and iron-sulfur (Fe-S) centers, to quinones in the photosynthetic chain and possibly in a chloroplast respiratory chain. The immediate electron acceptor for the enzyme in this species is believed to be plastoquinone. Couples the redox reaction to proton translocation, and thus conserves the redox energy in a proton gradient. This is NAD(P)H-quinone oxidoreductase subunit K, chloroplastic (ndhK) from Huperzia lucidula (Shining clubmoss).